The chain runs to 694 residues: Zinc finger BED domain-containing protein 5 (694 aa).

The BED-type zinc-finger motif lies at 109–165; that stretch reads RKYDESYLSFGFTYFGNRDAPHAQCVLCKKILSNSSLAPSKLRRHLETKHAAYKDKD. The Zn(2+) site is built by Cys-133, Cys-136, His-153, and His-158.

The polypeptide is Zinc finger BED domain-containing protein 5 (ZBED5) (Canis lupus familiaris (Dog)).